The chain runs to 458 residues: Transmembrane protein adipocyte-associated 1 homolog (458 aa).

N-linked (GlcNAc...) asparagine glycosylation is found at Asn21 and Asn45. Transmembrane regions (helical) follow at residues 81-101, 114-134, 152-172, 181-201, 225-245, 263-283, and 291-311; these read VILV…GSVI, AFTL…AYSM, IIIK…GLLF, ILIA…VQVI, FLFW…IMCL, LIYC…AALI, and LCFV…IIYF. Asn323 and Asn324 each carry an N-linked (GlcNAc...) asparagine glycan. The interval 409-458 is disordered; it reads RTGSDDYAHHRDSMLSEPSTGTTTRHLKGLGPQGSLVFEDDPSSLTSLRM. Basic and acidic residues predominate over residues 411–422; sequence GSDDYAHHRDSM.

It belongs to the UPF0359 family.

The protein resides in the membrane. The sequence is that of Transmembrane protein adipocyte-associated 1 homolog (tpra-1) from Caenorhabditis elegans.